The sequence spans 40 residues: Natriuretic peptide PaNP-b (40 aa).

An intrachain disulfide couples Cys9 to Cys25. A propeptide spanning residues 36-40 is cleaved from the precursor; sequence IPGGS.

Belongs to the natriuretic peptide family. In terms of tissue distribution, expressed by the venom gland.

Its subcellular location is the secreted. Snake venom natriuretic peptide that targets both NPR1 and NPR2. Exhibits hypotensive and vasodepressor activities. This chain is Natriuretic peptide PaNP-b, found in Pseudechis australis (Mulga snake).